Consider the following 1036-residue polypeptide: Mediator of RNA polymerase II transcription subunit 24 (1036 aa).

It belongs to the Mediator complex subunit 24 family. In terms of assembly, component of the Mediator complex.

It is found in the nucleus. Functionally, component of the Mediator complex, a coactivator involved in the regulated transcription of nearly all RNA polymerase II-dependent genes. Mediator functions as a bridge to convey information from gene-specific regulatory proteins to the basal RNA polymerase II transcription machinery. Mediator is recruited to promoters by direct interactions with regulatory proteins and serves as a scaffold for the assembly of a functional preinitiation complex with RNA polymerase II and the general transcription factors. The polypeptide is Mediator of RNA polymerase II transcription subunit 24 (MED24) (Anopheles gambiae (African malaria mosquito)).